The chain runs to 378 residues: Anhydro-N-acetylmuramic acid kinase (378 aa).

An ATP-binding site is contributed by 9-16; it reads GTSADGID.

It belongs to the anhydro-N-acetylmuramic acid kinase family.

The catalysed reaction is 1,6-anhydro-N-acetyl-beta-muramate + ATP + H2O = N-acetyl-D-muramate 6-phosphate + ADP + H(+). It participates in amino-sugar metabolism; 1,6-anhydro-N-acetylmuramate degradation. Its pathway is cell wall biogenesis; peptidoglycan recycling. Catalyzes the specific phosphorylation of 1,6-anhydro-N-acetylmuramic acid (anhMurNAc) with the simultaneous cleavage of the 1,6-anhydro ring, generating MurNAc-6-P. Is required for the utilization of anhMurNAc either imported from the medium or derived from its own cell wall murein, and thus plays a role in cell wall recycling. The chain is Anhydro-N-acetylmuramic acid kinase from Synechococcus elongatus (strain ATCC 33912 / PCC 7942 / FACHB-805) (Anacystis nidulans R2).